A 28-amino-acid polypeptide reads, in one-letter code: Chassatide C11 (28 aa).

3 disulfide bridges follow: Cys-3/Cys-19, Cys-7/Cys-21, and Cys-12/Cys-26. Met-16 bears the Methionine sulfoxide; in form chassatide chaC11A mark.

It belongs to the cyclotide family. Bracelet subfamily. As to expression, expressed in fruit, pedicel and stem but not in leaf and root (at protein level).

Its function is as follows. Chassatide C11: Probably participates in a plant defense mechanism. Active against E.coli ATCC 25922 (MIC=8.5 uM) but not against S.aureus ATCC 12600 or S.epidermidis ATCC 14990. Has cytotoxic and hemolytic activity. Chassatide C11A: Probably participates in a plant defense mechanism. Has no activity against bacteria up to a concentration of 80 uM. Has no cytotoxic and no hemolytic activity. The sequence is that of Chassatide C11 from Chassalia chartacea (Chassalia curviflora).